The primary structure comprises 100 residues: MNQQKLTHYDILIKPITTEKTMLDREKRKYVFEVNVLSNKALVKNAVESLFNVKVEKVNISLVKPKPKRRGRFEGKTRRWKKAVVTLKEGYTIKELEGQQ.

Belongs to the universal ribosomal protein uL23 family. As to quaternary structure, part of the 50S ribosomal subunit. Contacts protein L29, and trigger factor when it is bound to the ribosome.

One of the early assembly proteins it binds 23S rRNA. One of the proteins that surrounds the polypeptide exit tunnel on the outside of the ribosome. Forms the main docking site for trigger factor binding to the ribosome. The sequence is that of Large ribosomal subunit protein uL23 from Pseudothermotoga lettingae (strain ATCC BAA-301 / DSM 14385 / NBRC 107922 / TMO) (Thermotoga lettingae).